The following is a 276-amino-acid chain: A-factor receptor protein (276 aa).

The HTH tetR-type domain occupies 8–68; the sequence is VQTWRSIVDA…AIMDEQTSTV (61 aa). The H-T-H motif DNA-binding region spans 31 to 50; it reads AISEILRRAKVTKGALYFHF. Residues 207–220 are compositionally biased toward basic and acidic residues; that stretch reads EKAEREEQEARIAA. The tract at residues 207-276 is disordered; the sequence is EKAEREEQEA…AGVAAGGVVA (70 aa). Residues 221–235 show a composition bias toward low complexity; it reads EAKGAGSDAATDSGS. The span at 236 to 257 shows a compositional bias: gly residues; the sequence is RSGGSGLRGGGSGRGPRAGGAG.

Homodimer or multimer. Binds to both DNA and A-factor as a homodimer.

It localises to the cytoplasm. In terms of biological role, represses adpA expression by binding to the promoter region in the absence of A-factor, causing repression of streptomycin production and of sporulation. This chain is A-factor receptor protein (arpA), found in Streptomyces griseus.